The chain runs to 91 residues: UPF0223 protein SAB0963 (91 aa).

The protein belongs to the UPF0223 family.

This Staphylococcus aureus (strain bovine RF122 / ET3-1) protein is UPF0223 protein SAB0963.